We begin with the raw amino-acid sequence, 324 residues long: Glucokinase (324 aa).

An ATP-binding site is contributed by 6 to 11 (IDIGGT).

Belongs to the bacterial glucokinase family.

The protein resides in the cytoplasm. The catalysed reaction is D-glucose + ATP = D-glucose 6-phosphate + ADP + H(+). This Zymomonas mobilis subsp. mobilis (strain ATCC 31821 / ZM4 / CP4) protein is Glucokinase.